We begin with the raw amino-acid sequence, 132 residues long: Small ribosomal subunit protein uS8 (132 aa).

The protein belongs to the universal ribosomal protein uS8 family. Part of the 30S ribosomal subunit. Contacts proteins S5 and S12.

Its function is as follows. One of the primary rRNA binding proteins, it binds directly to 16S rRNA central domain where it helps coordinate assembly of the platform of the 30S subunit. This is Small ribosomal subunit protein uS8 from Borrelia garinii subsp. bavariensis (strain ATCC BAA-2496 / DSM 23469 / PBi) (Borreliella bavariensis).